A 1025-amino-acid chain; its full sequence is Retinoblastoma-related protein (1025 aa).

The tract at residues 1–20 (MEDHPPKPSIPTADASLSNH) is disordered. The domain A stretch occupies residues 422 to 623 (TPVTTAMTTA…EKGSSMYNSL (202 aa)). The segment at 422–875 (TPVTTAMTTA…NEIFIPAVKP (454 aa)) is pocket. The segment at 624–744 (TVARPALSAE…PGAGGETCAE (121 aa)) is spacer. The domain B stretch occupies residues 745-875 (TAINVFFSKI…NEIFIPAVKP (131 aa)).

This sequence belongs to the retinoblastoma protein (RB) family.

It is found in the nucleus. Regulator of biological processes that recruits a histone deacetylase to control gene transcription. May play a role in the entry into mitosis, negatively regulating the cell proliferation. Formation of stable complexes with geminiviridae replication-associated proteins may create a cellular environment which favors viral DNA replication. The protein is Retinoblastoma-related protein (pRB) of Camellia sinensis (Tea plant).